An 84-amino-acid chain; its full sequence is MAIVQHLFGITMQNSANLEQRIAELEMKITFQEGIIEELNQALIEQQFVIDKMQLQMRHVANKLKDLQPANIATQAEETPPPHY.

Belongs to the SlyX family.

This Mannheimia succiniciproducens (strain KCTC 0769BP / MBEL55E) protein is Protein SlyX homolog.